A 276-amino-acid polypeptide reads, in one-letter code: MLMITSFANPRVAQAFVDYMATQGVILTIQQHHQSDVWLADESQAERVRAELARFLENPADPRYLAASWQSGHTGSGLHYRRFPFIATLRERAGPVTWLIMIACILVFVVMSIVGAQSVMVWLAWPFDPSLKFEFWRYFTHAFMHFSLMHILFNLLWWWYIGGAVEKRLGSGKLIVITVISALLSGYVQQKFSGPWFGGLSGVVYALMGYAWLRGERDPQSGIYLQRGLIAFALIWIVAGWFDVFGMSMANGAHIAGLAVGLAMAFADTVNARKRT.

6 consecutive transmembrane segments (helical) span residues 96–116 (VTWL…IVGA), 142–162 (AFMH…WYIG), 169–189 (LGSG…GYVQ), 192–212 (FSGP…GYAW), 229–249 (LIAF…GMSM), and 250–270 (ANGA…ADTV). S201 (nucleophile) is an active-site residue. H254 is a catalytic residue.

It belongs to the peptidase S54 family.

The protein resides in the cell inner membrane. The catalysed reaction is Cleaves type-1 transmembrane domains using a catalytic dyad composed of serine and histidine that are contributed by different transmembrane domains.. Rhomboid-type serine protease that catalyzes intramembrane proteolysis. In Citrobacter koseri (strain ATCC BAA-895 / CDC 4225-83 / SGSC4696), this protein is Rhomboid protease GlpG.